Reading from the N-terminus, the 239-residue chain is Probable transcriptional regulatory protein BT9727_0453 (239 aa).

This sequence belongs to the TACO1 family. YeeN subfamily.

It is found in the cytoplasm. This Bacillus thuringiensis subsp. konkukian (strain 97-27) protein is Probable transcriptional regulatory protein BT9727_0453.